The chain runs to 31 residues: Cytochrome b6-f complex subunit 6 (31 aa).

A helical membrane pass occupies residues 4–24; sequence ITSYFGFLLVALTITSALFIG.

This sequence belongs to the PetL family. As to quaternary structure, the 4 large subunits of the cytochrome b6-f complex are cytochrome b6, subunit IV (17 kDa polypeptide, PetD), cytochrome f and the Rieske protein, while the 4 small subunits are PetG, PetL, PetM and PetN. The complex functions as a dimer.

Its subcellular location is the plastid. It localises to the chloroplast thylakoid membrane. Component of the cytochrome b6-f complex, which mediates electron transfer between photosystem II (PSII) and photosystem I (PSI), cyclic electron flow around PSI, and state transitions. PetL is important for photoautotrophic growth as well as for electron transfer efficiency and stability of the cytochrome b6-f complex. The sequence is that of Cytochrome b6-f complex subunit 6 from Panax ginseng (Korean ginseng).